Reading from the N-terminus, the 1171-residue chain is ATP-dependent helicase/deoxyribonuclease subunit B (1171 aa).

Residues 1–390 enclose the UvrD-like helicase ATP-binding domain; it reads MSLRFVIGRA…HPLVECIRSA (390 aa). 8–15 provides a ligand contact to ATP; sequence GRAGSGKS. The 307-residue stretch at 281 to 587 folds into the UvrD-like helicase C-terminal domain; that stretch reads MEQPRFHSPA…QFANIPPSLD (307 aa). Positions 805, 1129, 1132, and 1138 each coordinate [4Fe-4S] cluster.

The protein belongs to the helicase family. AddB/RexB type 1 subfamily. Heterodimer of AddA and AddB. The cofactor is Mg(2+). [4Fe-4S] cluster is required as a cofactor.

The heterodimer acts as both an ATP-dependent DNA helicase and an ATP-dependent, dual-direction single-stranded exonuclease. Recognizes the chi site generating a DNA molecule suitable for the initiation of homologous recombination. The AddB subunit has 5' -&gt; 3' nuclease activity but not helicase activity. In Bacillus cereus (strain B4264), this protein is ATP-dependent helicase/deoxyribonuclease subunit B.